Reading from the N-terminus, the 318-residue chain is Protease HtpX homolog (318 aa).

Transmembrane regions (helical) follow at residues 6-26 and 28-48; these read TAMLLAFMTALFMFVGFLIGG and GGMMIAFLIAAGMNFFSYWNS. His130 provides a ligand contact to Zn(2+). The active site involves Glu131. Position 134 (His134) interacts with Zn(2+). 2 consecutive transmembrane segments (helical) span residues 145 to 165 and 173 to 193; these read ITATLAGAISMLGNFAFFFGG and PLGFVGVLVAMIVAPLAAMLV. Residue Glu202 participates in Zn(2+) binding. The segment at 284-318 is disordered; it reads NVSTGPVRAVNPTRKSRSVPNTGRGGSQPPRGPWS.

It belongs to the peptidase M48B family. Zn(2+) is required as a cofactor.

It localises to the cell inner membrane. This is Protease HtpX homolog from Rhizobium etli (strain ATCC 51251 / DSM 11541 / JCM 21823 / NBRC 15573 / CFN 42).